A 95-amino-acid polypeptide reads, in one-letter code: MERAPEDAGPQREPYNEWALELLEELKNEAVRHFPRIWLHGLGQHIYNTYGDTWEGVEAIIRILQQLLFIHYRIGCQHSRIGITPQRRRNGTSRS.

The segment at 1–42 is homooligomerization; the sequence is MERAPEDAGPQREPYNEWALELLEELKNEAVRHFPRIWLHGL. A phosphoserine; by host mark is found at Ser-79, Ser-93, and Ser-95.

Belongs to the HIV-1 VPR protein family. Homooligomer, may form homodimer. Interacts with p6-gag region of the Pr55 Gag precursor protein through a (Leu-X-X)4 motif near the C-terminus of the P6gag protein. Interacts with host UNG. May interact with host RAD23A/HHR23A. Interacts with host VPRBP/DCAF1, leading to hijack the CUL4A-RBX1-DDB1-DCAF1/VPRBP complex, mediating ubiquitination of host proteins such as TERT and ZGPAT and arrest of the cell cycle in G2 phase. Post-translationally, phosphorylated on several residues by host. These phosphorylations regulate VPR activity for the nuclear import of the HIV-1 pre-integration complex.

It is found in the virion. The protein resides in the host nucleus. Its subcellular location is the host extracellular space. Functionally, during virus replication, may deplete host UNG protein, and incude G2-M cell cycle arrest. Acts by targeting specific host proteins for degradation by the 26S proteasome, through association with the cellular CUL4A-DDB1 E3 ligase complex by direct interaction with host VPRPB/DCAF-1. Cell cycle arrest reportedly occurs within hours of infection and is not blocked by antiviral agents, suggesting that it is initiated by the VPR carried into the virion. Additionally, VPR induces apoptosis in a cell cycle dependent manner suggesting that these two effects are mechanistically linked. Detected in the serum and cerebrospinal fluid of AIDS patient, VPR may also induce cell death to bystander cells. Its function is as follows. During virus entry, plays a role in the transport of the viral pre-integration (PIC) complex to the host nucleus. This function is crucial for viral infection of non-dividing macrophages. May act directly at the nuclear pore complex, by binding nucleoporins phenylalanine-glycine (FG)-repeat regions. This chain is Protein Vpr, found in Human immunodeficiency virus type 1 group N (isolate YBF30) (HIV-1).